Here is a 481-residue protein sequence, read N- to C-terminus: Chromosomal replication initiator protein DnaA (481 aa).

The tract at residues 1–74 (MSQDLWSFCL…ELGAEFHGAP (74 aa)) is domain I, interacts with DnaA modulators. Positions 74 to 144 (PIEIELVLPA…TASDLAYEKT (71 aa)) are domain II. A disordered region spans residues 101-123 (AGPAPAPTPSQAPAATAAAPAVV). The segment covering 111–123 (QAPAATAAAPAVV) has biased composition (low complexity). The segment at 145–361 (RLNADFTFDT…GALNKVVAFA (217 aa)) is domain III, AAA+ region. 4 residues coordinate ATP: G189, G191, K192, and T193. The domain IV, binds dsDNA stretch occupies residues 362 to 481 (RFHGRGITLE…VHVLTQVLRG (120 aa)).

Belongs to the DnaA family. In terms of assembly, oligomerizes as a right-handed, spiral filament on DNA at oriC.

The protein localises to the cytoplasm. Functionally, plays an essential role in the initiation and regulation of chromosomal replication. ATP-DnaA binds to the origin of replication (oriC) to initiate formation of the DNA replication initiation complex once per cell cycle. Binds the DnaA box (a 9 base pair repeat at the origin) and separates the double-stranded (ds)DNA. Forms a right-handed helical filament on oriC DNA; dsDNA binds to the exterior of the filament while single-stranded (ss)DNA is stabiized in the filament's interior. The ATP-DnaA-oriC complex binds and stabilizes one strand of the AT-rich DNA unwinding element (DUE), permitting loading of DNA polymerase. After initiation quickly degrades to an ADP-DnaA complex that is not apt for DNA replication. Binds acidic phospholipids. The chain is Chromosomal replication initiator protein DnaA from Aromatoleum aromaticum (strain DSM 19018 / LMG 30748 / EbN1) (Azoarcus sp. (strain EbN1)).